A 380-amino-acid chain; its full sequence is Phospho-N-acetylmuramoyl-pentapeptide-transferase (380 aa).

Helical transmembrane passes span 26–46 (IVAA…IFIE), 75–95 (MGGA…ADLA), 98–118 (FVWA…TDDW), 135–155 (LVLQ…DWRF), 161–181 (FPWV…FVPS), 183–203 (LFNP…VIAT), 222–242 (VVSA…IAGF), 259–279 (LGVF…YNTY), 283–303 (VFMG…MAVL), 311–331 (AILH…VWSF), and 357–377 (KIIV…LLSI).

Belongs to the glycosyltransferase 4 family. MraY subfamily. The cofactor is Mg(2+).

Its subcellular location is the cell inner membrane. It catalyses the reaction UDP-N-acetyl-alpha-D-muramoyl-L-alanyl-gamma-D-glutamyl-meso-2,6-diaminopimeloyl-D-alanyl-D-alanine + di-trans,octa-cis-undecaprenyl phosphate = di-trans,octa-cis-undecaprenyl diphospho-N-acetyl-alpha-D-muramoyl-L-alanyl-D-glutamyl-meso-2,6-diaminopimeloyl-D-alanyl-D-alanine + UMP. Its pathway is cell wall biogenesis; peptidoglycan biosynthesis. Its function is as follows. Catalyzes the initial step of the lipid cycle reactions in the biosynthesis of the cell wall peptidoglycan: transfers peptidoglycan precursor phospho-MurNAc-pentapeptide from UDP-MurNAc-pentapeptide onto the lipid carrier undecaprenyl phosphate, yielding undecaprenyl-pyrophosphoryl-MurNAc-pentapeptide, known as lipid I. The chain is Phospho-N-acetylmuramoyl-pentapeptide-transferase from Anaeromyxobacter dehalogenans (strain 2CP-1 / ATCC BAA-258).